Consider the following 192-residue polypeptide: Transmembrane protein 276 (192 aa).

The first 32 residues, 1–32, serve as a signal peptide directing secretion; it reads MVSKPRTEWSTVLSHLVLAGVSLHAAVSSVQS. 4 helical membrane-spanning segments follow: residues 35 to 55, 63 to 83, 92 to 112, and 114 to 134; these read GAAA…APGP, AGAW…FHWV, LLLG…PEGC, and VAGQ…AVFT.

The protein localises to the membrane. The sequence is that of Transmembrane protein 276 from Mus musculus (Mouse).